A 274-amino-acid chain; its full sequence is 2,3,4,5-tetrahydropyridine-2,6-dicarboxylate N-succinyltransferase (274 aa).

Positions 104 and 141 each coordinate substrate.

The protein belongs to the transferase hexapeptide repeat family. Homotrimer.

The protein resides in the cytoplasm. It catalyses the reaction (S)-2,3,4,5-tetrahydrodipicolinate + succinyl-CoA + H2O = (S)-2-succinylamino-6-oxoheptanedioate + CoA. It functions in the pathway amino-acid biosynthesis; L-lysine biosynthesis via DAP pathway; LL-2,6-diaminopimelate from (S)-tetrahydrodipicolinate (succinylase route): step 1/3. In Citrobacter koseri (strain ATCC BAA-895 / CDC 4225-83 / SGSC4696), this protein is 2,3,4,5-tetrahydropyridine-2,6-dicarboxylate N-succinyltransferase.